The following is a 41-amino-acid chain: MKILSSLKSAKTRHKDCQVVRRRGKVYVINKTNPRFKARQR.

It belongs to the bacterial ribosomal protein bL36 family.

This chain is Large ribosomal subunit protein bL36, found in Hydrogenovibrio crunogenus (strain DSM 25203 / XCL-2) (Thiomicrospira crunogena).